The chain runs to 114 residues: Mobility group protein 1A (114 aa).

A DNA-binding region (HMG box) is located at residues 5–71 (PKRPLSAYML…EYEKAMKEFE (67 aa)). The tract at residues 69–114 (EFERNGGDKSSGASTKKRGKAAEKKKPAKKSKKKDSEDDEEEDESD) is disordered. The span at 105-114 (EDDEEEDESD) shows a compositional bias: acidic residues.

It belongs to the HMGB family.

The protein resides in the nucleus. The protein localises to the chromosome. Functionally, found in condensed chromomeres. Binds preferentially to AT-rich DNA. This Chironomus tentans (Midge) protein is Mobility group protein 1A (HMG1A).